A 475-amino-acid polypeptide reads, in one-letter code: Aspartyl/glutamyl-tRNA(Asn/Gln) amidotransferase subunit B (475 aa).

The protein belongs to the GatB/GatE family. GatB subfamily. Heterotrimer of A, B and C subunits.

The catalysed reaction is L-glutamyl-tRNA(Gln) + L-glutamine + ATP + H2O = L-glutaminyl-tRNA(Gln) + L-glutamate + ADP + phosphate + H(+). The enzyme catalyses L-aspartyl-tRNA(Asn) + L-glutamine + ATP + H2O = L-asparaginyl-tRNA(Asn) + L-glutamate + ADP + phosphate + 2 H(+). Allows the formation of correctly charged Asn-tRNA(Asn) or Gln-tRNA(Gln) through the transamidation of misacylated Asp-tRNA(Asn) or Glu-tRNA(Gln) in organisms which lack either or both of asparaginyl-tRNA or glutaminyl-tRNA synthetases. The reaction takes place in the presence of glutamine and ATP through an activated phospho-Asp-tRNA(Asn) or phospho-Glu-tRNA(Gln). This Trichlorobacter lovleyi (strain ATCC BAA-1151 / DSM 17278 / SZ) (Geobacter lovleyi) protein is Aspartyl/glutamyl-tRNA(Asn/Gln) amidotransferase subunit B.